The sequence spans 190 residues: Apolipoprotein M (190 aa).

The signal sequence occupies residues 1-17 (MFHQVWAALLYLYGLLF). Intrachain disulfides connect cysteine 23–cysteine 169, cysteine 95–cysteine 185, and cysteine 130–cysteine 159. Glutamate 138 and arginine 145 together coordinate tetradecanoate.

It belongs to the calycin superfamily. Lipocalin family. Highly divergent. In terms of assembly, interacts with LRP2; LRP2 mediates APOM renal uptake and subsequent lysosomal degradation. As to expression, expressed by the liver; secreted in plasma.

It is found in the secreted. Its function is as follows. Probably involved in lipid transport. Can bind sphingosine-1-phosphate, myristic acid, palmitic acid and stearic acid, retinol, all-trans-retinoic acid and 9-cis-retinoic acid. The polypeptide is Apolipoprotein M (Apom) (Rattus norvegicus (Rat)).